We begin with the raw amino-acid sequence, 2367 residues long: RNA1 polyprotein (2367 aa).

Residues 587–1194 lie on the Cytoplasmic side of the membrane; that stretch reads AKCEDLAVVS…GGRLLLILCS (608 aa). The SF3 helicase domain maps to 776–940; it reads ELRTLRNDMA…AGVAFNPHDS (165 aa). Residue 804–811 participates in ATP binding; sequence GPPGVGKT. The helical transmembrane segment at 1195–1215 threads the bilayer; it reads CMLLGIACYTFFNALAILIGG. At 1216-1235 the chain is on the lumenal side; it reads TSVAAGAAAMVDIGACGSTS. The Peptidase C3 domain maps to 1258 to 1468; that stretch reads PAVWSEETGH…YVCKFPHIEV (211 aa). Active-site for picornain 3C-like protease activity residues include H1302, E1339, and C1432. The RdRp catalytic domain maps to 1832-1957; it reads DKMYCCDYSK…GIHPNIESAF (126 aa).

It belongs to the nepoviruses RNA1 polyprotein family. Specific enzymatic cleavages by picornain 3C-like protease in vivo yield mature proteins. Picornain 3C-like protease is autocatalytically processed. Post-translationally, VPg is uridylylated by the polymerase and is covalently linked to the 5'-end of genomic RNA. This uridylylated form acts as a nucleotide-peptide primer for the polymerase.

The protein resides in the host endoplasmic reticulum lumen. The protein localises to the host endoplasmic reticulum membrane. It catalyses the reaction RNA(n) + a ribonucleoside 5'-triphosphate = RNA(n+1) + diphosphate. Its function is as follows. Picornain 3C-like protease is a thiol protease that cleaves the P1 and P2 polyproteins. The chain is RNA1 polyprotein from Fragaria vesca (Woodland strawberry).